A 31-amino-acid polypeptide reads, in one-letter code: Photosystem II reaction center protein T (31 aa).

Residues 3–23 form a helical membrane-spanning segment; it reads AFSYTLLMALAAVTLFFAVAF.

Belongs to the PsbT family. In terms of assembly, PSII is composed of 1 copy each of membrane proteins PsbA, PsbB, PsbC, PsbD, PsbE, PsbF, PsbH, PsbI, PsbJ, PsbK, PsbL, PsbM, PsbT, PsbX, PsbY, Psb30/Ycf12, peripheral proteins PsbO, CyanoQ (PsbQ), PsbU, PsbV and a large number of cofactors. It forms dimeric complexes.

Its subcellular location is the cellular thylakoid membrane. In terms of biological role, found at the monomer-monomer interface of the photosystem II (PS II) dimer, plays a role in assembly and dimerization of PSII. PSII is a light-driven water plastoquinone oxidoreductase, using light energy to abstract electrons from H(2)O, generating a proton gradient subsequently used for ATP formation. The polypeptide is Photosystem II reaction center protein T (Prochlorococcus marinus (strain MIT 9211)).